The sequence spans 237 residues: Oligoribonuclease, mitochondrial (237 aa).

The N-terminal 25 residues, Met1–Gly25, are a transit peptide targeting the mitochondrion. The Exonuclease domain maps to Met43–Leu207. 2 residues coordinate Mg(2+): Asp47 and Glu49. Phosphoserine is present on Ser92. Phosphotyrosine is present on Tyr122. Mg(2+) is bound at residue Asp147. Position 173 is an N6-acetyllysine (Lys173). Residue His194 is part of the active site. Asp199 is a Mg(2+) binding site.

Belongs to the oligoribonuclease family. Homodimer. Homotetramer. It depends on Mn(2+) as a cofactor. Requires Mg(2+) as cofactor.

The protein localises to the mitochondrion intermembrane space. The protein resides in the mitochondrion matrix. Its subcellular location is the mitochondrion. It localises to the cytoplasm. It is found in the nucleus. 3'-to-5'exoribonuclease that preferentially degrades DNA and RNA oligonucleotides composed of only two nucleotides. Binds and degrades longer oligonucleotides with a lower affinity. Plays dual roles in mitochondria, scavenging nanoRNAs (small RNA oligonucleotides of &lt;5 nucleotides) that are produced by the degradosome and clearing short RNAs that are generated by RNA processing. Essential for correct initiation of mitochondrial transcription, degrading mitochondrial RNA dinucleotides to prevent RNA-primed transcription at non-canonical sites in the mitochondrial genome. Essential for embryonic development. In Mus musculus (Mouse), this protein is Oligoribonuclease, mitochondrial (Rexo2).